Here is a 159-residue protein sequence, read N- to C-terminus: U1 small nuclear ribonucleoprotein C (159 aa).

A Matrin-type zinc finger spans residues 4 to 36; the sequence is FYCDYCDTYLTHDSPSVRKTHCSGRKHKENVKD. Tyr-8 carries the phosphotyrosine modification. Ser-17 bears the Phosphoserine mark. The residue at position 52 (Lys-52) is an N6-acetyllysine. 2 disordered regions span residues 62-96 and 140-159; these read IPPT…PAPH and RPPA…RPDR. Residues 63–92 show a composition bias toward pro residues; that stretch reads PPTPFSAPPPAGAMIPPPPSLPGPPRPGMM.

This sequence belongs to the U1 small nuclear ribonucleoprotein C family. As to quaternary structure, component of the U1 snRNP. The U1 snRNP is composed of the U1 snRNA and the 7 core Sm proteins SNRPB, SNRPD1, SNRPD2, SNRPD3, SNRPE, SNRPF and SNRPG that assemble in a heptameric protein ring on the Sm site of the small nuclear RNA to form the core snRNP, and at least 3 U1 snRNP-specific proteins SNRNP70/U1-70K, SNRPA/U1-A and SNRPC/U1-C. SNRPC/U1-C interacts with U1 snRNA and the 5' splice-site region of the pre-mRNA. Interacts (via N-terminus) with TIA1 (via C-terminus); thereby promoting spliceosomal U1 snRNP recruitment to 5' splice sites.

It is found in the nucleus. Functionally, component of the spliceosomal U1 snRNP, which is essential for recognition of the pre-mRNA 5' splice-site and the subsequent assembly of the spliceosome. SNRPC/U1-C is directly involved in initial 5' splice-site recognition for both constitutive and regulated alternative splicing. The interaction with the 5' splice-site seems to precede base-pairing between the pre-mRNA and the U1 snRNA. Stimulates commitment or early (E) complex formation by stabilizing the base pairing of the 5' end of the U1 snRNA and the 5' splice-site region. The polypeptide is U1 small nuclear ribonucleoprotein C (Homo sapiens (Human)).